The following is a 428-amino-acid chain: Phosphomethylpyrimidine synthase 2 (428 aa).

Residues M94, Y123, H162, 184–186 (SRG), 225–228 (NGMR), and E264 each bind substrate. H268 contributes to the Zn(2+) binding site. Residue Y291 coordinates substrate. Zn(2+) is bound at residue H332. 3 residues coordinate [4Fe-4S] cluster: C408, C411, and C415.

Belongs to the ThiC family. [4Fe-4S] cluster serves as cofactor.

It catalyses the reaction 5-amino-1-(5-phospho-beta-D-ribosyl)imidazole + S-adenosyl-L-methionine = 4-amino-2-methyl-5-(phosphooxymethyl)pyrimidine + CO + 5'-deoxyadenosine + formate + L-methionine + 3 H(+). The protein operates within cofactor biosynthesis; thiamine diphosphate biosynthesis. Its function is as follows. Catalyzes the synthesis of the hydroxymethylpyrimidine phosphate (HMP-P) moiety of thiamine from aminoimidazole ribotide (AIR) in a radical S-adenosyl-L-methionine (SAM)-dependent reaction. This is Phosphomethylpyrimidine synthase 2 from Methanosarcina acetivorans (strain ATCC 35395 / DSM 2834 / JCM 12185 / C2A).